Consider the following 218-residue polypeptide: Cell division protein SepF (218 aa).

The segment at D25–Q115 is disordered. Positions S29–A43 are enriched in polar residues. Residues P47 to R63 are compositionally biased toward basic and acidic residues.

Belongs to the SepF family. Homodimer. Interacts with FtsZ.

The protein resides in the cytoplasm. Cell division protein that is part of the divisome complex and is recruited early to the Z-ring. Probably stimulates Z-ring formation, perhaps through the cross-linking of FtsZ protofilaments. Its function overlaps with FtsA. This is Cell division protein SepF from Streptococcus pyogenes serotype M12 (strain MGAS2096).